A 321-amino-acid chain; its full sequence is ATP-dependent 6-phosphofructokinase (321 aa).

G12 contacts ATP. ADP contacts are provided by residues 22-26 and 55-60; these read RGVVR and RYSVSD. ATP is bound by residues 73–74 and 103–106; these read RF and GDGS. D104 lines the Mg(2+) pocket. A substrate-binding site is contributed by 127–129; it reads TID. Catalysis depends on D129, which acts as the Proton acceptor. An ADP-binding site is contributed by R156. Residues R164 and 171–173 contribute to the substrate site; that span reads MGR. ADP-binding positions include 187–189 and 215–217; these read GCE and KRH. Substrate contacts are provided by residues E224, R245, and 251-254; that span reads HVQR.

The protein belongs to the phosphofructokinase type A (PFKA) family. ATP-dependent PFK group I subfamily. Prokaryotic clade 'B1' sub-subfamily. Homotetramer. Mg(2+) serves as cofactor.

It is found in the cytoplasm. It carries out the reaction beta-D-fructose 6-phosphate + ATP = beta-D-fructose 1,6-bisphosphate + ADP + H(+). Its pathway is carbohydrate degradation; glycolysis; D-glyceraldehyde 3-phosphate and glycerone phosphate from D-glucose: step 3/4. Its activity is regulated as follows. Allosterically activated by ADP and other diphosphonucleosides, and allosterically inhibited by phosphoenolpyruvate. Its function is as follows. Catalyzes the phosphorylation of D-fructose 6-phosphate to fructose 1,6-bisphosphate by ATP, the first committing step of glycolysis. This is ATP-dependent 6-phosphofructokinase from Mannheimia succiniciproducens (strain KCTC 0769BP / MBEL55E).